Consider the following 74-residue polypeptide: Mitotic-spindle organizing protein 1 (74 aa).

It belongs to the MOZART1 family. Part of the gamma-tubulin complex.

It localises to the cytoplasm. It is found in the cytoskeleton. Its subcellular location is the microtubule organizing center. The protein localises to the spindle pole body. Functionally, required for gamma-tubulin complex recruitment to the microtubule organizing center (MTOC). The protein is Mitotic-spindle organizing protein 1 of Emericella nidulans (strain FGSC A4 / ATCC 38163 / CBS 112.46 / NRRL 194 / M139) (Aspergillus nidulans).